A 375-amino-acid chain; its full sequence is OVARIAN TUMOR DOMAIN-containing deubiquitinating enzyme 7 (375 aa).

Residues 1-18 show a composition bias toward basic residues; it reads MAKTKQQKSKPKKQPHQK. Residues 1-23 form a disordered region; that stretch reads MAKTKQQKSKPKKQPHQKQGKDC. One can recognise an OTU domain in the interval 37–161; the sequence is LKIIQVTADG…GEHYNSVRSK (125 aa). Aspartate 45 is an active-site residue. Cysteine 48 acts as the Nucleophile in catalysis. The active site involves histidine 154. The UBA-like domain maps to 202-250; the sequence is HVNAGAIKVVMSGSCCDNTEKAEQVLLQVNGDVDAAIEFLIADQGMESL. 2 stretches are compositionally biased toward polar residues: residues 251-264 and 290-305; these read TENDTETASASDTI and ASGNNSETVQAKCTTQ. A disordered region spans residues 251-306; sequence TENDTETASASDTINPKHASDSPMENTEQAREELIEEESASGNNSETVQAKCTTQT. Residues 308–315 carry the Nuclear localization signal motif; it reads DKKIPRNK.

This sequence belongs to the peptidase C85 family.

The protein resides in the nucleus. The catalysed reaction is Thiol-dependent hydrolysis of ester, thioester, amide, peptide and isopeptide bonds formed by the C-terminal Gly of ubiquitin (a 76-residue protein attached to proteins as an intracellular targeting signal).. Its function is as follows. Hydrolase that can remove conjugated ubiquitin from proteins in vitro and may therefore play an important regulatory role at the level of protein turnover by preventing degradation. Cysteine protease with a preference for 'Lys-63' over 'Lys-48' over 'Met-1' -linked ubiquitin (UB) tetramers as substrates. Also cleaves RUB-GST fusion. This Arabidopsis thaliana (Mouse-ear cress) protein is OVARIAN TUMOR DOMAIN-containing deubiquitinating enzyme 7.